The sequence spans 251 residues: Cell division protein ZapD (251 aa).

It belongs to the ZapD family. Interacts with FtsZ.

The protein localises to the cytoplasm. Functionally, cell division factor that enhances FtsZ-ring assembly. Directly interacts with FtsZ and promotes bundling of FtsZ protofilaments, with a reduction in FtsZ GTPase activity. This is Cell division protein ZapD from Burkholderia lata (strain ATCC 17760 / DSM 23089 / LMG 22485 / NCIMB 9086 / R18194 / 383).